We begin with the raw amino-acid sequence, 151 residues long: Methylglyoxal synthase (151 aa).

In terms of domain architecture, MGS-like spans 6-151 (RVMPAHKHIA…DYDAYLAERV (146 aa)). Residues histidine 19, lysine 23, 45–48 (TGTT), and 65–66 (SG) contribute to the substrate site. Aspartate 71 acts as the Proton donor/acceptor in catalysis. Residue histidine 98 participates in substrate binding.

Belongs to the methylglyoxal synthase family.

It carries out the reaction dihydroxyacetone phosphate = methylglyoxal + phosphate. Catalyzes the formation of methylglyoxal from dihydroxyacetone phosphate. In Aliivibrio fischeri (strain ATCC 700601 / ES114) (Vibrio fischeri), this protein is Methylglyoxal synthase.